A 289-amino-acid chain; its full sequence is Pantothenate synthetase (289 aa).

30–37 (MGNLHEGH) is a binding site for ATP. Catalysis depends on histidine 37, which acts as the Proton donor. Residue glutamine 61 participates in (R)-pantoate binding. Glutamine 61 contacts beta-alanine. 149-152 (GEKD) provides a ligand contact to ATP. A (R)-pantoate-binding site is contributed by glutamine 155. 186-189 (MSSR) provides a ligand contact to ATP.

This sequence belongs to the pantothenate synthetase family. Homodimer.

It localises to the cytoplasm. The catalysed reaction is (R)-pantoate + beta-alanine + ATP = (R)-pantothenate + AMP + diphosphate + H(+). It participates in cofactor biosynthesis; (R)-pantothenate biosynthesis; (R)-pantothenate from (R)-pantoate and beta-alanine: step 1/1. Functionally, catalyzes the condensation of pantoate with beta-alanine in an ATP-dependent reaction via a pantoyl-adenylate intermediate. The polypeptide is Pantothenate synthetase (Psychromonas ingrahamii (strain DSM 17664 / CCUG 51855 / 37)).